The following is a 153-amino-acid chain: Large ribosomal subunit protein uL13 (153 aa).

Residues 128–153 (SEHPHEAQSPEVLDVTSMNSKNTRSA) are disordered. Residues 143–153 (TSMNSKNTRSA) show a composition bias toward polar residues.

The protein belongs to the universal ribosomal protein uL13 family. Part of the 50S ribosomal subunit.

This protein is one of the early assembly proteins of the 50S ribosomal subunit, although it is not seen to bind rRNA by itself. It is important during the early stages of 50S assembly. The polypeptide is Large ribosomal subunit protein uL13 (Roseobacter denitrificans (strain ATCC 33942 / OCh 114) (Erythrobacter sp. (strain OCh 114))).